The following is a 237-amino-acid chain: Chalcone--flavanone isomerase (237 aa).

The substrate site is built by threonine 50 and serine 192.

The protein belongs to the chalcone isomerase family.

It catalyses the reaction a chalcone = a flavanone.. It participates in secondary metabolite biosynthesis; flavonoid biosynthesis. Functionally, catalyzes the intramolecular cyclization of bicyclic chalcones into tricyclic (S)-flavanones. Responsible for the isomerization of 4,2',4',6'-tetrahydroxychalcone (also termed chalcone) into naringenin. The protein is Chalcone--flavanone isomerase (CHI) of Callistephus chinensis (China aster).